Reading from the N-terminus, the 556-residue chain is PPE family protein PPE2 (556 aa).

The tract at residues 8–164 is PPE; it reads ASPPEVHSAL…ASYQAVSTAA (157 aa). The interval 201-256 is SH3-like; that stretch reads QKIGYTDFYNNVIQPFINWLTNLPFLQAMFSGFDPWLPSLGNPLTFLSPANIAFAL. The interval 319–340 is leucine zipper motif; that stretch reads LEQTLALLPAALPLLAAPLAPL. 2 disordered regions span residues 385–418 and 443–556; these read TPTP…PPVT and GTGV…TRVE. Pro residues predominate over residues 400–417; sequence PTPPLGPPPPPVTAPPPV. Over residues 456-471 the composition is skewed to low complexity; that stretch reads AEAPASAAAPEEQVQP. Residues 472 to 481 are compositionally biased toward basic residues; sequence QRRRRPKIKQ. The Nuclear localization signal motif lies at 473–481; that stretch reads RRRRPKIKQ.

It belongs to the mycobacterial PPE family.

The protein resides in the secreted. The protein localises to the host cytoplasm. It localises to the host nucleus. Its function is as follows. Inhibits nitric oxide (NO) production in activated macrophages. Acts by inhibiting expression of the host inducible nitric oxide synthase (iNOS). PPE2 is translocated into the host macrophage nucleus, where it interacts with a GATA-binding site overlapping with the TATA box of NOS2 (iNOS) promoter, and strongly inhibits NOS2 gene transcription. Reduction in NO production in turn facilitates intracellular survival of the bacilli inside the macrophage. In addition, disrupts the assembly of NADPH oxidase complex, which inhibits NADPH oxidase-mediated reactive oxygen species (ROS) generation in macrophages and favors M.tuberculosis survival. Acts by interacting with NCF2, the cytosolic subunit of NADPH oxidase, and preventing translocation of NCF2 and NCF1 to the membrane, which causes a reduction of the functional assembly of NADPH oxidase complex and a decrease in NADPH oxidase activity. This chain is PPE family protein PPE2 (PPE2), found in Mycobacterium tuberculosis (strain CDC 1551 / Oshkosh).